The chain runs to 286 residues: MKAKPLSQDPGSKRYAYRINKEENRKELKHVKINESSLVQEGQKIDLPKKRYYRQRAHSNPFSDHQLEYPVSPQDMDWSKLYPYYKNAENGQMTKKVTIADIGCGFGGLMIDLSPAFPEDLILGMEIRVQVTNYVEDRIIALRNNTASKHGFQNINVLRGNAMKFLPNFFEKGQLSKMFFCFPDPHFKQRKHKARIITNTLLSEYAYVLKEGGVVYTITDVKDLHEWMVKHLEEHPLFERLSKEWEENDECVQIMRNATEEGKKVERKKGDKFVACFTRLPTPAIL.

S7 and S59 each carry phosphoserine. S-adenosyl-L-methionine is bound by residues G103, 126 to 127 (EI), 161 to 162 (NA), and C181. D184 is an active-site residue. 259–261 (TEE) provides a ligand contact to S-adenosyl-L-methionine.

The protein belongs to the class I-like SAM-binding methyltransferase superfamily. TrmB family. As to quaternary structure, forms a complex with TRM82.

The protein localises to the nucleus. The catalysed reaction is guanosine(46) in tRNA + S-adenosyl-L-methionine = N(7)-methylguanosine(46) in tRNA + S-adenosyl-L-homocysteine. The protein operates within tRNA modification; N(7)-methylguanine-tRNA biosynthesis. Its function is as follows. Methyltransferase that catalyzes the formation of N(7)-methylguanine at position 46 (m7G46) in tRNA, a modification required to maintain stability of tRNAs; its absence resulting in tRNA decay. Both the D-stem and T-stem structures of tRNAs are required for efficient methyltransferase activity. This chain is tRNA (guanine-N(7)-)-methyltransferase, found in Saccharomyces cerevisiae (strain YJM789) (Baker's yeast).